The primary structure comprises 129 residues: Small ribosomal subunit protein uS12 (129 aa).

Belongs to the universal ribosomal protein uS12 family. In terms of assembly, part of the 30S ribosomal subunit. Contacts proteins S8 and S17. May interact with IF1 in the 30S initiation complex.

Its function is as follows. With S4 and S5 plays an important role in translational accuracy. In terms of biological role, interacts with and stabilizes bases of the 16S rRNA that are involved in tRNA selection in the A site and with the mRNA backbone. Located at the interface of the 30S and 50S subunits, it traverses the body of the 30S subunit contacting proteins on the other side and probably holding the rRNA structure together. The combined cluster of proteins S8, S12 and S17 appears to hold together the shoulder and platform of the 30S subunit. This Rickettsia typhi (strain ATCC VR-144 / Wilmington) protein is Small ribosomal subunit protein uS12.